The following is a 206-amino-acid chain: MMMLFFTVAMVHIVALMSPGPDFFFVSQTAVSRSRKEAMMGVLGITCGVMVWAGVALLGLHLIIEKMAWLHTIIMVGGGLYLCWMGYQMLRGALKKQDAAASSPHIELAQSGRSFLKGLLTNLSNPKAIIYFGSVFSLFVGDNVGAAARWGIFALITLETLAWFTVVASLFALPKMRRGYQRLAKWIDGFAGALFAGFGIHLIISR.

A helical membrane pass occupies residues 1–21; that stretch reads MMMLFFTVAMVHIVALMSPGP. Over 22–43 the chain is Periplasmic; that stretch reads DFFFVSQTAVSRSRKEAMMGVL. Residues 44–64 traverse the membrane as a helical segment; that stretch reads GITCGVMVWAGVALLGLHLII. The Cytoplasmic portion of the chain corresponds to 65-66; it reads EK. The helical transmembrane segment at 67 to 87 threads the bilayer; sequence MAWLHTIIMVGGGLYLCWMGY. The Periplasmic segment spans residues 88-149; the sequence is QMLRGALKKQ…VGDNVGAAAR (62 aa). The chain crosses the membrane as a helical span at residues 150 to 173; it reads WGIFALITLETLAWFTVVASLFAL. Residues 174–206 lie on the Cytoplasmic side of the membrane; sequence PKMRRGYQRLAKWIDGFAGALFAGFGIHLIISR.

This sequence belongs to the Rht family.

Its subcellular location is the cell inner membrane. In terms of biological role, conducts the efflux of threonine. The protein is Threonine efflux protein (rhtC) of Salmonella typhimurium (strain LT2 / SGSC1412 / ATCC 700720).